The following is a 320-amino-acid chain: o-succinylbenzoate synthase (320 aa).

Catalysis depends on K133, which acts as the Proton donor. 3 residues coordinate Mg(2+): D161, E190, and D213. K235 serves as the catalytic Proton acceptor.

This sequence belongs to the mandelate racemase/muconate lactonizing enzyme family. MenC type 1 subfamily. A divalent metal cation serves as cofactor.

The enzyme catalyses (1R,6R)-6-hydroxy-2-succinyl-cyclohexa-2,4-diene-1-carboxylate = 2-succinylbenzoate + H2O. It functions in the pathway quinol/quinone metabolism; 1,4-dihydroxy-2-naphthoate biosynthesis; 1,4-dihydroxy-2-naphthoate from chorismate: step 4/7. It participates in quinol/quinone metabolism; menaquinone biosynthesis. Functionally, converts 2-succinyl-6-hydroxy-2,4-cyclohexadiene-1-carboxylate (SHCHC) to 2-succinylbenzoate (OSB). This Shigella sonnei (strain Ss046) protein is o-succinylbenzoate synthase.